A 624-amino-acid polypeptide reads, in one-letter code: Chaperone protein HtpG (624 aa).

Positions 1–336 are a; substrate-binding; the sequence is MKGQETRGFQ…SSDLPLNVSR (336 aa). Residues 337–552 are b; it reads EILQDSTVTR…ADEMSTQMAK (216 aa). The c stretch occupies residues 553–624; sequence LFAAAGQKVP…IRRMNQLLVS (72 aa).

The protein belongs to the heat shock protein 90 family. In terms of assembly, homodimer.

Its subcellular location is the cytoplasm. Its function is as follows. Molecular chaperone. Has ATPase activity. This chain is Chaperone protein HtpG, found in Shigella flexneri.